The sequence spans 443 residues: Tol-Pal system protein TolB (443 aa).

The first 33 residues, 1-33, serve as a signal peptide directing secretion; sequence MKIGIINTKIRTVFSAFACMIAASLVCTMPARA.

It belongs to the TolB family. As to quaternary structure, the Tol-Pal system is composed of five core proteins: the inner membrane proteins TolA, TolQ and TolR, the periplasmic protein TolB and the outer membrane protein Pal. They form a network linking the inner and outer membranes and the peptidoglycan layer.

It is found in the periplasm. Functionally, part of the Tol-Pal system, which plays a role in outer membrane invagination during cell division and is important for maintaining outer membrane integrity. In Brucella canis (strain ATCC 23365 / NCTC 10854 / RM-666), this protein is Tol-Pal system protein TolB.